Consider the following 98-residue polypeptide: Small ribosomal subunit protein eS24 (98 aa).

Belongs to the eukaryotic ribosomal protein eS24 family. As to quaternary structure, part of the 30S ribosomal subunit.

The chain is Small ribosomal subunit protein eS24 from Thermococcus kodakarensis (strain ATCC BAA-918 / JCM 12380 / KOD1) (Pyrococcus kodakaraensis (strain KOD1)).